Reading from the N-terminus, the 612-residue chain is UvrABC system protein C (612 aa).

Residues 20-98 enclose the GIY-YIG domain; the sequence is THSGVYRMLD…IKQHRPKYNI (79 aa). In terms of domain architecture, UVR spans 208–243; it reads STVLEEISAKMYQASEDMEYEKAQVYRDQLVVLRKL.

Belongs to the UvrC family. In terms of assembly, interacts with UvrB in an incision complex.

The protein localises to the cytoplasm. Functionally, the UvrABC repair system catalyzes the recognition and processing of DNA lesions. UvrC both incises the 5' and 3' sides of the lesion. The N-terminal half is responsible for the 3' incision and the C-terminal half is responsible for the 5' incision. In Francisella tularensis subsp. novicida (strain U112), this protein is UvrABC system protein C.